Here is a 292-residue protein sequence, read N- to C-terminus: Protease HtpX (292 aa).

The next 2 helical transmembrane spans lie at Ile5–Leu25 and Ser34–Leu54. A Zn(2+)-binding site is contributed by His140. Glu141 is an active-site residue. His144 is a Zn(2+) binding site. A run of 2 helical transmembrane segments spans residues Leu155 to Ile175 and Ile193 to Phe213. Glu218 is a binding site for Zn(2+).

The protein belongs to the peptidase M48B family. It depends on Zn(2+) as a cofactor.

It is found in the cell inner membrane. The polypeptide is Protease HtpX (Xanthomonas euvesicatoria pv. vesicatoria (strain 85-10) (Xanthomonas campestris pv. vesicatoria)).